The following is a 173-amino-acid chain: Small ribosomal subunit protein mS25 (173 aa).

Belongs to the mitochondrion-specific ribosomal protein mS25 family. In terms of assembly, component of the mitochondrial ribosome small subunit (28S) which comprises a 12S rRNA and about 30 distinct proteins.

The protein resides in the mitochondrion. In Bos taurus (Bovine), this protein is Small ribosomal subunit protein mS25 (MRPS25).